A 185-amino-acid polypeptide reads, in one-letter code: Elongation factor P (185 aa).

The protein belongs to the elongation factor P family.

The protein resides in the cytoplasm. The protein operates within protein biosynthesis; polypeptide chain elongation. Involved in peptide bond synthesis. Stimulates efficient translation and peptide-bond synthesis on native or reconstituted 70S ribosomes in vitro. Probably functions indirectly by altering the affinity of the ribosome for aminoacyl-tRNA, thus increasing their reactivity as acceptors for peptidyl transferase. This chain is Elongation factor P, found in Azoarcus sp. (strain BH72).